Consider the following 629-residue polypeptide: Probable potassium transport system protein Kup 3 (629 aa).

A run of 12 helical transmembrane segments spans residues L20–F40, V61–L81, P106–T126, P143–I163, I171–A191, F212–T232, W253–L273, F291–I311, I343–F363, A372–L392, I400–A420, and F425–I445.

Belongs to the HAK/KUP transporter (TC 2.A.72) family.

The protein resides in the cell inner membrane. The enzyme catalyses K(+)(in) + H(+)(in) = K(+)(out) + H(+)(out). In terms of biological role, transport of potassium into the cell. Likely operates as a K(+):H(+) symporter. The chain is Probable potassium transport system protein Kup 3 from Legionella pneumophila (strain Lens).